The following is a 395-amino-acid chain: Phosphoprotein (395 aa).

2 disordered regions span residues 31 to 109 (VETV…DTQL) and 126 to 214 (NKSS…PASV). Positions 65–74 (TPDRQNRSDK) are enriched in basic and acidic residues. Polar residues-rich tracts occupy residues 75–98 (QPSTPEQMTPQNSPPATSTDQPPT), 146–168 (LPTQQQGSQPSRGNSQERPQNRA), and 203–212 (SGQSQDNTPA). Residues 222–285 (DFVQAMMSMM…LGMMKILDPG (64 aa)) form a multimerization region.

It belongs to the rubulavirus/avulavirus P protein family. As to quaternary structure, homotetramer. Interacts (via multimerization domain) with polymerase L; this interaction forms the polymerase L-P complex. Interacts (via N-terminus) with N0 (via Ncore); this interaction allows P to chaperon N0 to avoid N polymerization before encapsidation. Interacts (via C-terminus) with N-RNA template; this interaction positions the polymerase on the template for both transcription and replication.

In terms of biological role, essential cofactor of the RNA polymerase L that plays a central role in the transcription and replication by forming the polymerase complex with RNA polymerase L and recruiting L to the genomic N-RNA template for RNA synthesis. Also plays a central role in the encapsidation of nascent RNA chains by forming the encapsidation complex with the nucleocapsid protein N (N-P complex). Acts as a chaperone for newly synthesized free N protein, so-called N0, allowing encapsidation of nascent RNA chains during replication. The nucleoprotein protein N prevents excessive phosphorylation of P, which leads to down-regulation of viral transcription/ replication. Participates, together with N, in the formation of viral factories (viroplasms), which are large inclusions in the host cytoplasm where replication takes place. The protein is Phosphoprotein (P/C) of Gallus gallus (Chicken).